We begin with the raw amino-acid sequence, 253 residues long: MWPFGKSTADRVKDAFKANPVLAPLGLEVQESRGTVKVTGEVARQSQIGLINAVAGGINGVKNIDVSGVTVLQQASAPAAQTAPTTPAQTSPSVQDSPSTPVQMPDIVQQGAGDVEIEDTSRIAKAVLSAIRGNGELANNPIDVLQSGNSVILRGAVDSDHELRLAEQLARGVQGVSGVDISGLRVAQGAKELAKDKDEDTGDTVYTVKPGDSLSKIAEHYYGDQMEYKKIAHYNNISNPDLIQPGQKLRIPG.

In terms of domain architecture, BON 1 spans 4–73 (FGKSTADRVK…IDVSGVTVLQ (70 aa)). A compositionally biased stretch (low complexity) spans 79–93 (AAQTAPTTPAQTSPS). A disordered region spans residues 79 to 105 (AAQTAPTTPAQTSPSVQDSPSTPVQMP). The BON 2 domain occupies 119–188 (DTSRIAKAVL…VDISGLRVAQ (70 aa)). One can recognise a LysM domain in the interval 204–251 (TVYTVKPGDSLSKIAEHYYGDQMEYKKIAHYNNISNPDLIQPGQKLRI).

This is an uncharacterized protein from Deinococcus radiodurans (strain ATCC 13939 / DSM 20539 / JCM 16871 / CCUG 27074 / LMG 4051 / NBRC 15346 / NCIMB 9279 / VKM B-1422 / R1).